The following is a 128-amino-acid chain: Ribosome-binding factor A (128 aa).

This sequence belongs to the RbfA family. In terms of assembly, monomer. Binds 30S ribosomal subunits, but not 50S ribosomal subunits or 70S ribosomes.

It localises to the cytoplasm. Its function is as follows. One of several proteins that assist in the late maturation steps of the functional core of the 30S ribosomal subunit. Associates with free 30S ribosomal subunits (but not with 30S subunits that are part of 70S ribosomes or polysomes). Required for efficient processing of 16S rRNA. May interact with the 5'-terminal helix region of 16S rRNA. The protein is Ribosome-binding factor A of Microcystis aeruginosa (strain NIES-843 / IAM M-2473).